The sequence spans 156 residues: Glutamate-rich protein 2 (156 aa).

Disordered regions lie at residues 29–66 (LQDI…TQAP) and 116–156 (EKTQ…EDGS). Composition is skewed to acidic residues over residues 39–56 (SAED…DDED) and 140–156 (SDEE…EDGS).

The protein is Glutamate-rich protein 2 (ERICH2) of Homo sapiens (Human).